A 274-amino-acid chain; its full sequence is MFTDKETHRKPFPTWAHLLHSEPSKQFVFGNWKMNKTLTEAQTFLKSFLSSDILSNPQIITGIIPPFTLLSACQQAVSDSPIFLGAQTTHEADSGAFTGEISAPMLKDIGVDFVLIGHSERRHIFHEQNPVLAEKAAAAIHSGMIPVLCIGETLEEQESGATQDILLNQLTIGLSKLPEQASFILAYEPVWAIGTGKVAHPDLVQETHAFCRKTIASLFSKDIAERTPILYGGSVKADNARSLSLCPDVNGLLVGGASLSSENFLSIIQQIDIP.

31-33 (NWK) is a binding site for substrate. His-118 functions as the Electrophile in the catalytic mechanism. Glu-188 (proton acceptor) is an active-site residue. Substrate contacts are provided by residues Gly-194, Ser-234, and 255 to 256 (GG).

The protein belongs to the triosephosphate isomerase family. In terms of assembly, homodimer.

The protein resides in the cytoplasm. It carries out the reaction D-glyceraldehyde 3-phosphate = dihydroxyacetone phosphate. Its pathway is carbohydrate biosynthesis; gluconeogenesis. It functions in the pathway carbohydrate degradation; glycolysis; D-glyceraldehyde 3-phosphate from glycerone phosphate: step 1/1. Its function is as follows. Involved in the gluconeogenesis. Catalyzes stereospecifically the conversion of dihydroxyacetone phosphate (DHAP) to D-glyceraldehyde-3-phosphate (G3P). The protein is Triosephosphate isomerase of Chlamydia trachomatis serovar L2 (strain ATCC VR-902B / DSM 19102 / 434/Bu).